We begin with the raw amino-acid sequence, 567 residues long: Glucose-6-phosphate isomerase, cytosolic A (567 aa).

Residues 156-157, 212-217, glutamine 356, glutamate 360, histidine 391, and lysine 516 each bind D-glucose 6-phosphate; these read GS and SKTFTT. The active-site Proton donor is the glutamate 360. Catalysis depends on residues histidine 391 and lysine 516.

This sequence belongs to the GPI family. As to quaternary structure, homodimer.

It is found in the cytoplasm. The enzyme catalyses alpha-D-glucose 6-phosphate = beta-D-fructose 6-phosphate. The protein operates within carbohydrate degradation; glycolysis; D-glyceraldehyde 3-phosphate and glycerone phosphate from D-glucose: step 2/4. Catalyzes the conversion of glucose-6-phosphate to fructose-6-phosphate, the second step in glycolysis, and the reverse reaction during gluconeogenesis. The sequence is that of Glucose-6-phosphate isomerase, cytosolic A from Oryza sativa subsp. japonica (Rice).